The sequence spans 185 residues: uncharacterized protein (185 aa).

In terms of tissue distribution, component of the acid-insoluble and acid-soluble organic matrix of calcified layers of the shell (at protein level).

It is found in the secreted. This is an uncharacterized protein from Lottia gigantea (Giant owl limpet).